The chain runs to 356 residues: Phosphate acyltransferase (356 aa).

The protein belongs to the PlsX family. In terms of assembly, homodimer. Probably interacts with PlsY.

It localises to the cytoplasm. The catalysed reaction is a fatty acyl-[ACP] + phosphate = an acyl phosphate + holo-[ACP]. The protein operates within lipid metabolism; phospholipid metabolism. In terms of biological role, catalyzes the reversible formation of acyl-phosphate (acyl-PO(4)) from acyl-[acyl-carrier-protein] (acyl-ACP). This enzyme utilizes acyl-ACP as fatty acyl donor, but not acyl-CoA. The protein is Phosphate acyltransferase of Shigella sonnei (strain Ss046).